The sequence spans 737 residues: Photosystem I P700 chlorophyll a apoprotein A2 (737 aa).

Helical transmembrane passes span 46-69, 135-158, 175-199, 273-291, 333-356, 372-398, 420-442, and 520-538; these read LFSTHFGHLAIIGLWVSGNLFHIA, LYQGSIFMMILSAWALFAGWLHLQ, LNHHLAVLFGFSSIAWTGHLVHVAI, IAHHHLAIGCIFVIAGHMY, LHFQLGLALASLGVVTSLVAQHMY, AALYTHHQYIAIALMCGAFAHGAIFFI, AIISHLSWVSLFLGFHTLGLYVH, and FLVHHAIALGLHTTTLILV. The [4Fe-4S] cluster site is built by cysteine 562 and cysteine 571. A run of 2 helical transmembrane segments spans residues 578–599 and 646–668; these read AFYLAVFWALNTVGWLTFYWHW and LAVWAWMFLFGHLVWATGFMFLI. Chlorophyll a contacts are provided by histidine 657, methionine 665, and tyrosine 673. Tryptophan 674 contributes to the phylloquinone binding site. A helical transmembrane segment spans residues 710–730; the sequence is VVGLAHFTVGYVLTYAAFLIA.

The protein belongs to the PsaA/PsaB family. The PsaA/B heterodimer binds the P700 chlorophyll special pair and subsequent electron acceptors. PSI consists of a core antenna complex that captures photons, and an electron transfer chain that converts photonic excitation into a charge separation. The cyanobacterial PSI reaction center is composed of one copy each of PsaA,B,C,D,E,F,I,J,K,L,M and X, and forms trimeric complexes. Requires PSI electron transfer chain: 5 chlorophyll a, 1 chlorophyll a', 2 phylloquinones and 3 4Fe-4S clusters. PSI core antenna: 90 chlorophyll a, 22 carotenoids, 3 phospholipids and 1 galactolipid. P700 is a chlorophyll a/chlorophyll a' dimer, A0 is one or more chlorophyll a, A1 is one or both phylloquinones and FX is a shared 4Fe-4S iron-sulfur center. as cofactor.

It is found in the cellular thylakoid membrane. The enzyme catalyses reduced [plastocyanin] + hnu + oxidized [2Fe-2S]-[ferredoxin] = oxidized [plastocyanin] + reduced [2Fe-2S]-[ferredoxin]. PsaA and PsaB bind P700, the primary electron donor of photosystem I (PSI), as well as the electron acceptors A0, A1 and FX. PSI is a plastocyanin/cytochrome c6-ferredoxin oxidoreductase, converting photonic excitation into a charge separation, which transfers an electron from the donor P700 chlorophyll pair to the spectroscopically characterized acceptors A0, A1, FX, FA and FB in turn. Oxidized P700 is reduced on the lumenal side of the thylakoid membrane by plastocyanin or cytochrome c6. In Synechococcus sp. (strain CC9605), this protein is Photosystem I P700 chlorophyll a apoprotein A2.